We begin with the raw amino-acid sequence, 508 residues long: Erythropoietin receptor (508 aa).

Positions 1–24 (MNHLWTHLWPGVGSLCLLLAGAAW) are cleaved as a signal peptide. Residues 25–250 (ASLPKPLDPK…SLLTASDLDP (226 aa)) lie on the Extracellular side of the membrane. Cysteines 52 and 62 form a disulfide. N76 carries N-linked (GlcNAc...) asparagine glycosylation. Residues C91 and C107 are joined by a disulfide bond. Residues 148 to 247 (PPAGLLARRA…EPASLLTASD (100 aa)) enclose the Fibronectin type-III domain. An N-linked (GlcNAc...) asparagine glycan is attached at N184. Residues 233–237 (WSAWS) carry the WSXWS motif motif. Residues 251–273 (LILTLSLILVLILLLLAVLALLS) traverse the membrane as a helical segment. Residues 274-508 (HRRTLKQKIW…PSPPGYVACS (235 aa)) lie on the Cytoplasmic side of the membrane. K281 is covalently cross-linked (Glycyl lysine isopeptide (Lys-Gly) (interchain with G-Cter in ubiquitin)). Residues 282 to 290 (IWPGIPSPE) carry the Box 1 motif motif. Residues Y368 and Y426 each carry the phosphotyrosine; by JAK2 modification. Positions 452–457 (IKYLYL) match the ITIM motif motif. A Glycyl lysine isopeptide (Lys-Gly) (interchain with G-Cter in ubiquitin) cross-link involves residue K453. A phosphotyrosine; by JAK2 mark is found at Y454, Y456, Y468, Y489, and Y504. Residues 467-508 (DYSSGGSQGAQGDSLNSPFLNPYENSLIPAPEPSPPGYVACS) are disordered.

The protein belongs to the type I cytokine receptor family. Type 1 subfamily. In terms of assembly, forms homodimers on EPO stimulation. The tyrosine-phosphorylated form interacts with several SH2 domain-containing proteins including LYN, the adapter protein SH2B2, PTPN6, PTPN11, JAK2, PI3 kinases, STAT5A/B, SOCS3, CRKL. Interacts with INPP5D/SHIP1. SH2B2 binding inhibits the JAK-STAT signaling. Interacts with RHEX; this interaction occurs in a erythropoietin (EPO)-dependent manner. Interacts with ATXN2L. In terms of processing, on EPO stimulation, phosphorylated on C-terminal tyrosine residues by JAK2. The phosphotyrosine motifs are also recruitment sites for several SH2-containing proteins and adapter proteins which mediate cell proliferation. Phosphorylation on Tyr-454 is required for PTPN6 interaction, Tyr-426 for PTPN11. Tyr-426 is also required for SOCS3 binding, but Tyr-454/Tyr-456 motif is the preferred binding site. Ubiquitinated by the ECS(SOCS2) complex following ligand-binding and phosphorylation by JAK2, leading to its degradation by the proteasome. Regulation by the ECS(SOCS2) complex acts as a negative feedback loop of erythropoietin-mediated signaling pathway. Ubiquitination at Lys-281 mediates receptor internalization, whereas ubiquitination at Lys-453 promotes trafficking of activated receptors to the lysosomes for degradation. Ubiquitinated by NOSIP; appears to be either multi-monoubiquitinated or polyubiquitinated. Ubiquitination mediates proliferation and survival of EPO-dependent cells.

Its subcellular location is the cell membrane. Functionally, receptor for erythropoietin, which mediates erythropoietin-induced erythroblast proliferation and differentiation. Upon EPO stimulation, EPOR dimerizes triggering the JAK2/STAT5 signaling cascade. In some cell types, can also activate STAT1 and STAT3. May also activate the LYN tyrosine kinase. Its function is as follows. Isoform EPOR-T acts as a dominant-negative receptor of EPOR-mediated signaling. The chain is Erythropoietin receptor (EPOR) from Canis lupus familiaris (Dog).